Reading from the N-terminus, the 81-residue chain is Photosystem I iron-sulfur center (81 aa).

2 4Fe-4S ferredoxin-type domains span residues Ala2–Trp31 and Gly37–Tyr68. Cys11, Cys14, Cys17, Cys21, Cys48, Cys51, Cys54, and Cys58 together coordinate [4Fe-4S] cluster.

The cyanobacterial PSI reaction center is composed of one copy each of PsaA,B,C,D,E,F,I,J,K,L,M and X, and forms trimeric complexes. It depends on [4Fe-4S] cluster as a cofactor.

The protein localises to the cellular thylakoid membrane. It carries out the reaction reduced [plastocyanin] + hnu + oxidized [2Fe-2S]-[ferredoxin] = oxidized [plastocyanin] + reduced [2Fe-2S]-[ferredoxin]. Apoprotein for the two 4Fe-4S centers FA and FB of photosystem I (PSI); essential for photochemical activity. FB is the terminal electron acceptor of PSI, donating electrons to ferredoxin. The C-terminus interacts with PsaA/B/D and helps assemble the protein into the PSI complex. Required for binding of PsaD and PsaE to PSI. PSI is a plastocyanin/cytochrome c6-ferredoxin oxidoreductase, converting photonic excitation into a charge separation, which transfers an electron from the donor P700 chlorophyll pair to the spectroscopically characterized acceptors A0, A1, FX, FA and FB in turn. This Synechococcus elongatus protein is Photosystem I iron-sulfur center (psaC).